We begin with the raw amino-acid sequence, 497 residues long: MEMIIISLCLATILALLLLKQFLNRTYTAKVNLPPSPWRVPVIGNLHQLSLHPHRSLRSLSHRYGPLMLLHFGRVPVLVVSSSDVAHDLMKTHDLKVANRPQLKVVEKIFNGGREMVFSPYGEYWRQIKSVCIVNLLNKKKVQSFEKVREEEISEMMERVEKASSDSSPLNLSELLLTLTSDVTSRVSLGRKYSKEESMSDFKIQMRKITELVGGFPVGEYIPCLAWIDKLRGVDEKAEEVSKAFGDLMEKVLQEHLDATDKPTLDFVDVLLSLERHERNGVQIRRSDIKFLILDMFLAGTETTYALLEWIMTELIRHPECMKKLQDEIRAKATKLILYISEEDVEDMKYLKAVVKEVLRLHPPLPLLVPRELSEDIKLKGYDIAAGTQVIINAWAIQRDTMTWGIDAEEFRPERHLDSLVDFRGTNFEFIPFGSGRRICPGIGFAMALVEVTLANLVNRFNWRMEVQHSGDEYDLAESTGLDVCRKFPLIVFPSPA.

A helical membrane pass occupies residues 3 to 23 (MIIISLCLATILALLLLKQFL). Position 440 (Cys440) interacts with heme.

The protein belongs to the cytochrome P450 family. Heme is required as a cofactor.

It localises to the membrane. The chain is Cytochrome P450 71A14 (CYP71A14) from Arabidopsis thaliana (Mouse-ear cress).